The chain runs to 359 residues: 3-dehydroquinate synthase (359 aa).

NAD(+)-binding positions include 71 to 76 (DGEAYK), 105 to 109 (GVIGD), 129 to 130 (TT), Lys-142, and Lys-151. The Zn(2+) site is built by Glu-184, His-247, and His-264.

This sequence belongs to the sugar phosphate cyclases superfamily. Dehydroquinate synthase family. Co(2+) is required as a cofactor. It depends on Zn(2+) as a cofactor. Requires NAD(+) as cofactor.

The protein resides in the cytoplasm. The catalysed reaction is 7-phospho-2-dehydro-3-deoxy-D-arabino-heptonate = 3-dehydroquinate + phosphate. The protein operates within metabolic intermediate biosynthesis; chorismate biosynthesis; chorismate from D-erythrose 4-phosphate and phosphoenolpyruvate: step 2/7. Its function is as follows. Catalyzes the conversion of 3-deoxy-D-arabino-heptulosonate 7-phosphate (DAHP) to dehydroquinate (DHQ). The sequence is that of 3-dehydroquinate synthase from Burkholderia vietnamiensis (strain G4 / LMG 22486) (Burkholderia cepacia (strain R1808)).